We begin with the raw amino-acid sequence, 265 residues long: MWKIESFLLSKLFLCIALCTAYVAFSSAMMEPGLWLLSRPIVPLNRTSTVFGLTIVAIGLSALSSWLSKLTLNNFTSDDSWDWSQEIVVVTGASSGIGAEIVRLLAELSIKTFILDPVPPDNSVLKNGSVHYYKVDITKPKEVSAAAREIQVKFSSPTVLINNAGVGLAKNLLDENETERRHLMNVNLLSQFTTVQEFLPAMIEKNHGHIVTMASSASYISSPQIVSYAASKAALVGFHEGLGIELVKRYNAKKIRTTLVFAPLL.

A helical transmembrane segment spans residues 6-26 (SFLLSKLFLCIALCTAYVAFS). A glycan (N-linked (GlcNAc...) asparagine) is linked at asparagine 45. Residues 47–67 (TSTVFGLTIVAIGLSALSSWL) form a helical membrane-spanning segment. Asparagine 74 is a glycosylation site (N-linked (GlcNAc...) asparagine). Valine 89 is an NADP(+) binding site. A glycan (N-linked (GlcNAc...) asparagine) is linked at asparagine 127. Residues aspartate 136 and asparagine 163 each coordinate NADP(+). Asparagine 176 is a glycosylation site (N-linked (GlcNAc...) asparagine). Residue serine 216 is the Proton donor of the active site. Positions 228 and 232 each coordinate NADP(+). Catalysis depends on tyrosine 228, which acts as the Proton acceptor. The active-site Lowers pKa of active site Tyr is the lysine 232.

It belongs to the short-chain dehydrogenases/reductases (SDR) family.

The protein resides in the membrane. The enzyme catalyses a primary alcohol + NAD(+) = an aldehyde + NADH + H(+). It catalyses the reaction a secondary alcohol + NAD(+) = a ketone + NADH + H(+). It functions in the pathway mycotoxin biosynthesis. Functionally, dehydrogenase; part of the Tox1B locus, one of the 2 loci that mediate the biosynthesis of T-toxin, a family of linear polyketides 37 to 45 carbons in length, of which the major component is 41 carbons, and which leads to high virulence to maize. One of the PKSs (PKS1 or PKS2) could synthesize a precursor, used subsequently by the other PKS as starter unit, to add additional carbons. Variability in the length of the final carbon backbone C35-47 could be achieved by varying the number of condensation cycles, or use of different starter or extender units or might be due to decarboxylation of the penultimate product, catalyzed by DEC1. Additional proteins are required for the biosynthesis of T-toxin, including oxidoreductases RED1, RED2, RED3, LAM1 and OXI1, as well as esterase TOX9. This Cochliobolus heterostrophus (strain C4 / ATCC 48331 / race T) (Southern corn leaf blight fungus) protein is Dehydrogenase RED2.